Here is a 274-residue protein sequence, read N- to C-terminus: Diaminopimelate epimerase (274 aa).

Asn11, Gln44, and Asn64 together coordinate substrate. Cys73 (proton donor) is an active-site residue. Substrate contacts are provided by residues 74–75, Asn157, Asn190, and 208–209; these read GN and ER. The active-site Proton acceptor is Cys217. Residue 218–219 participates in substrate binding; that stretch reads GS.

Belongs to the diaminopimelate epimerase family. In terms of assembly, homodimer.

It is found in the cytoplasm. The catalysed reaction is (2S,6S)-2,6-diaminopimelate = meso-2,6-diaminopimelate. It functions in the pathway amino-acid biosynthesis; L-lysine biosynthesis via DAP pathway; DL-2,6-diaminopimelate from LL-2,6-diaminopimelate: step 1/1. In terms of biological role, catalyzes the stereoinversion of LL-2,6-diaminopimelate (L,L-DAP) to meso-diaminopimelate (meso-DAP), a precursor of L-lysine and an essential component of the bacterial peptidoglycan. This Edwardsiella ictaluri (strain 93-146) protein is Diaminopimelate epimerase.